A 321-amino-acid polypeptide reads, in one-letter code: Ribosomal RNA small subunit methyltransferase H (321 aa).

S-adenosyl-L-methionine contacts are provided by residues 29 to 31, aspartate 48, tyrosine 76, aspartate 97, and glutamine 104; that span reads GGH. Positions 277-321 are disordered; the sequence is LTRGAEPASETEKAENPRAASVRLRAVERTAPNPDHTRKPTGGAS.

Belongs to the methyltransferase superfamily. RsmH family.

The protein localises to the cytoplasm. It carries out the reaction cytidine(1402) in 16S rRNA + S-adenosyl-L-methionine = N(4)-methylcytidine(1402) in 16S rRNA + S-adenosyl-L-homocysteine + H(+). In terms of biological role, specifically methylates the N4 position of cytidine in position 1402 (C1402) of 16S rRNA. This Frankia casuarinae (strain DSM 45818 / CECT 9043 / HFP020203 / CcI3) protein is Ribosomal RNA small subunit methyltransferase H.